The following is an 85-amino-acid chain: Hepcidin (85 aa).

A signal peptide spans 1–22 (MALSTRIQAACLLLLLLASVAS). Positions 23–54 (VSVLPHQTGQLTDLRAQDTAGAEAGLQPTLQL) are excised as a propeptide. 4 disulfides stabilise this stretch: Cys67-Cys83, Cys70-Cys73, Cys71-Cys79, and Cys74-Cys82.

It belongs to the hepcidin family. In terms of assembly, interacts with SLC40A1; this interaction promotes SLC40A1 rapid ubiquitination.

It localises to the secreted. Functionally, liver-produced hormone that constitutes the main circulating regulator of iron absorption and distribution across tissues. Acts by promoting endocytosis and degradation of ferroportin/SLC40A1, leading to the retention of iron in iron-exporting cells and decreased flow of iron into plasma. Controls the major flows of iron into plasma: absorption of dietary iron in the intestine, recycling of iron by macrophages, which phagocytose old erythrocytes and other cells, and mobilization of stored iron from hepatocytes. In terms of biological role, has strong antimicrobial activity against E.coli ML35P N.cinerea and weaker against S.epidermidis, S.aureus and group b streptococcus bacteria. Active against the fungus C.albicans. No activity against P.aeruginosa. The sequence is that of Hepcidin (HAMP) from Canis lupus familiaris (Dog).